A 362-amino-acid chain; its full sequence is PDZ and LIM domain protein 3 (362 aa).

Residues 1–84 (MPQNVVLPGP…QLCLKIDRAE (84 aa)) form the PDZ domain. A phosphoserine mark is found at Ser18, Ser92, and Ser263. A disordered region spans residues 261–282 (DGSDDRPAGTRSVRPVTKVHGG). The LIM zinc-binding domain occupies 290–349 (PLCDKCGSGIVGAVVKARDKYRHPECFVCADCNLNLKQKGYFFVEGELYCEMHARARTRP).

In terms of assembly, interacts with ACTN2. Forms a heterodimer with PDLIM4 (via LIM domain). In terms of tissue distribution, highly expressed in skeletal muscle and at low levels in the heart.

It is found in the cytoplasm. The protein resides in the myofibril. It localises to the sarcomere. The protein localises to the z line. In terms of biological role, may play a role in the organization of actin filament arrays within muscle cells. This Rattus norvegicus (Rat) protein is PDZ and LIM domain protein 3 (Pdlim3).